The sequence spans 405 residues: Indoleamine 2,3-dioxygenase acdA (405 aa).

Position 312 (His-312) interacts with heme.

It belongs to the indoleamine 2,3-dioxygenase family. It depends on heme as a cofactor.

The enzyme catalyses L-tryptophan + O2 = N-formyl-L-kynurenine. Its pathway is secondary metabolite biosynthesis. Indoleamine 2,3-dioxygenase; part of the gene cluster that mediates the biosynthesis of aspcandine, a pyrrolobenzazepine alkaloid. Initially, the indoleamine 2,3-dioxygenase acdA accepts L-tryptophan and performs the oxidative opening of the indole ring to yield N'-formyl-L-kynurenine, which undergoes the spontaneous deformylation reaction to provide L-kynurenine. The kynurenine 3-monooxygenase acdD then hydroxylates L-kynurenine to afford 3-hydroxy-L-kynurenine. 3-hydroxy-L-kynurenine is activated by the A domain of the NRPS-PKS acdB and subsequently loaded onto the enzyme. The KS domain conducts the decarboxylative condensation of the 3-hydroxy-L-kynurenyl and malonyl moieties, and subsequent nucleophilic attacks by the two amino groups would occur nonenzymatically at two distinct positions, achieving the chain release and the construction of the tricyclic system. Finally, a dehydration reaction completes the biosynthesis to yield aspcandine. This Aspergillus candidus protein is Indoleamine 2,3-dioxygenase acdA.